The chain runs to 225 residues: NAD(P)H-hydrate epimerase (225 aa).

Positions 9–209 constitute a YjeF N-terminal domain; that stretch reads MQTIDNYTVE…DIGLLTPQDF (201 aa). Residue 57-61 participates in (6S)-NADPHX binding; sequence NNGAD. K(+) is bound by residues N58 and D119. (6S)-NADPHX contacts are provided by residues 123–129 and D152; that span reads GTGLNNL. T155 is a binding site for K(+).

This sequence belongs to the NnrE/AIBP family. The cofactor is K(+).

It catalyses the reaction (6R)-NADHX = (6S)-NADHX. The catalysed reaction is (6R)-NADPHX = (6S)-NADPHX. Its function is as follows. Catalyzes the epimerization of the S- and R-forms of NAD(P)HX, a damaged form of NAD(P)H that is a result of enzymatic or heat-dependent hydration. This is a prerequisite for the S-specific NAD(P)H-hydrate dehydratase to allow the repair of both epimers of NAD(P)HX. The polypeptide is NAD(P)H-hydrate epimerase (Leuconostoc sp. (strain C2)).